An 877-amino-acid polypeptide reads, in one-letter code: MMESLTVNENTINEFEIKNDIIIEQQQIQSKTSIPLLNIKDGNTTTTNTINEINNNNNNIETSTMSRKSLMTPSATYESLIRQQKTKDCNLTVKVFEARNLIEARLRKREMVKNGKSFKRAQNLLTEISSPNLMTFSDTTDPYCTVQLEKQKQRTRTIPKKLNPFWCEEFQLEISDPASAKLVLSVMDEKKYSNDEHIGKLVIPINTLKDQKERELWFPLTQPQSSKKVPQIQILFNFKPISLTDPSQPGHIQWKVLFGRNLSHSLATPLPSMSAASMGGSTSTENISNVYTNTTPFINWSVRSKKGDIVIDEEGIAWQDALTNGITRELKDSIECITFTLWRYEPKTFSDDGDISGLKSPRGTNSSASGSGFIPSTPPPSSHQKSNDTTATTTPSSTPSTPISPSSQSNNIKTPDSKTRSSSNASTNTPQTTPKSTGTSGGPAPPETINLSSSINSTSSLISNGSINVIDSSNNLHHHHNNGTNIMNPLKDGYEQYFIGQGIVLASHIDIEKPNDQWLCLYPKQTLDNKFGDIRLKLKYSEEVVLPLQSYQPLLELLQQENLYTITLLGKVTKHRESVSNNLIRVFEKTGKCLYLLKSLTDHEIDSTNNPDIIFRGNSLATKSVDLFMKLIGIPYLSQTIGPLIKKIYSSKKSCEIDPTKLEKGEDIKKNCKNLLSWVKKMTTAILSSVNNCPGPLREVFKSIQDKVVQRYPKDEITRYTAVSGFIFLRFFCPAILAPKLFDLMPDHPGIKTTRSLILIAKTLQNLANQVEFGEYKEDFMKDMNRFVIDNMENMKSFINTLSTVPADCPPGALQSPIILEKELACLYRHLIKQRQDMAEEMESTESEPKTQQEKDSFGKLIKILNSLDEDVQLASN.

The region spanning Thr-72–Phe-218 is the C2 domain. A disordered region spans residues Ser-350 to Asn-456. The span at Thr-389–Ser-409 shows a compositional bias: low complexity. Polar residues predominate over residues Asn-410–Ala-425. Composition is skewed to low complexity over residues Ser-426 to Gly-438 and Glu-447 to Asn-456. The region spanning Gly-591–Leu-802 is the Ras-GAP domain. Residues Leu-820–Glu-848 are a coiled coil.

In terms of biological role, may function as a Ras GTPase-activating protein. The protein is Probable Ras GTPase-activating-like protein ngap (ngap) of Dictyostelium discoideum (Social amoeba).